The following is a 275-amino-acid chain: Undecaprenyl-diphosphatase (275 aa).

8 consecutive transmembrane segments (helical) span residues 2 to 22 (LDIF…FLPI), 43 to 63 (FINM…IVIY), 83 to 103 (WQIW…GLPL), 111 to 131 (MTSW…FIVL), 161 to 181 (VLSM…AMLI), 186 to 206 (YVAT…ASLL), 225 to 245 (ILLV…KFLL), and 255 to 275 (PFGW…LVFA).

This sequence belongs to the UppP family.

It is found in the cell membrane. It carries out the reaction di-trans,octa-cis-undecaprenyl diphosphate + H2O = di-trans,octa-cis-undecaprenyl phosphate + phosphate + H(+). Catalyzes the dephosphorylation of undecaprenyl diphosphate (UPP). Confers resistance to bacitracin. In Lactobacillus delbrueckii subsp. bulgaricus (strain ATCC 11842 / DSM 20081 / BCRC 10696 / JCM 1002 / NBRC 13953 / NCIMB 11778 / NCTC 12712 / WDCM 00102 / Lb 14), this protein is Undecaprenyl-diphosphatase.